A 357-amino-acid polypeptide reads, in one-letter code: MDSVEKTTNRSEQKSRKFLKSLIRKQPQELLLVIGTGVSAAVAPGIPALCSWRSCIEAVIEAAEQLEVLHPGDVAEFRRKVTKDRDLLVVAHDLIRKMSPRTGDAKPSFFQDCLMEVFDDLEQHIRSPVVLQSILSLMDRGAMVLTTNYDNLLEAFGRRQNKPMESLDLKDKTKVLEWARGHMKYGVLHIHGLYTDPCGVVLDPSGYKDVTQDAEVMEVLQNLYRTKSFLFVGCGETLRDQIFQALFLYSVPNKVDLEHYMLVLKENEDHFFKHQADMLLHGIKVVSYGDCFDHFPGYVQDLATQICKQQSPDADRVDSTTLLGNACQDCAKRKLEENGIEVSKKRTQSDTDDAGGS.

N-acetylmethionine is present on Met-1. Residues 30-50 (LLLVIGTGVSAAVAPGIPALC) traverse the membrane as a helical segment. At Ser-311 the chain carries Phosphoserine.

This sequence belongs to the FAM118 family.

Its subcellular location is the membrane. The polypeptide is Protein FAM118A (FAM118A) (Homo sapiens (Human)).